A 223-amino-acid polypeptide reads, in one-letter code: Imidazoleglycerol-phosphate dehydratase (223 aa).

The protein belongs to the imidazoleglycerol-phosphate dehydratase family.

It catalyses the reaction D-erythro-1-(imidazol-4-yl)glycerol 3-phosphate = 3-(imidazol-4-yl)-2-oxopropyl phosphate + H2O. The protein operates within amino-acid biosynthesis; L-histidine biosynthesis; L-histidine from 5-phospho-alpha-D-ribose 1-diphosphate: step 6/9. This chain is Imidazoleglycerol-phosphate dehydratase (HIS3), found in Torulaspora delbrueckii (Yeast).